Here is a 328-residue protein sequence, read N- to C-terminus: UPF0324 membrane protein AF_1621 (328 aa).

Transmembrane regions (helical) follow at residues 21 to 39 (LQML…IINL), 43 to 60 (ALEP…AGNL), 73 to 95 (YVPF…PYLG), 101 to 123 (IVAA…SSRL), 130 to 152 (SILL…SPLI), 162 to 184 (AIMI…AHYA), 191 to 213 (FAVL…QLFG), 223 to 240 (GIRI…SIIY), 245 to 267 (FYVP…YLPG), 271 to 293 (QALR…YTVN), and 305 to 327 (LFAS…GSGA).

It belongs to the UPF0324 family.

It is found in the cell membrane. The protein is UPF0324 membrane protein AF_1621 of Archaeoglobus fulgidus (strain ATCC 49558 / DSM 4304 / JCM 9628 / NBRC 100126 / VC-16).